Here is a 71-residue protein sequence, read N- to C-terminus: Protein DP71L (71 aa).

Important for host CHOP inhibition regions lie at residues 16–18 (VRF) and 57–61 (LSAVL).

Belongs to the asfivirus DP71L family. As to quaternary structure, interacts (via C-terminus) with host PPP1CB.

Interacts with the host phosphatase PP1 catalytic subunit (PPP1CB) and recruits it to dephosphorylate EIF2S1/eIF2alpha and therefore restores the host translation that has been shut-down by the host. Also inhibits the EIF2S1/eIF2alpha-ATF4-DDIT3/CHOP pathway. This is Protein DP71L from Ornithodoros (relapsing fever ticks).